Here is a 614-residue protein sequence, read N- to C-terminus: FAD-dependent monooxygenase terD (614 aa).

Residues 1 to 23 (MSSKFDVVICGSGTAGLAAATWL) form the signal peptide. FAD is bound by residues 6 to 35 (DVVI…ILES), Gln-44, Val-137, and 239 to 241 (RVY). An N-linked (GlcNAc...) asparagine glycan is attached at Asn-260. FAD is bound by residues Tyr-282 and Asp-303. Asn-317 is a glycosylation site (N-linked (GlcNAc...) asparagine). Ser-319 provides a ligand contact to FAD. An N-linked (GlcNAc...) asparagine glycan is attached at Asn-602.

This sequence belongs to the PheA/TfdB FAD monooxygenase family. It depends on FAD as a cofactor.

Its pathway is secondary metabolite biosynthesis. In terms of biological role, FAD-dependent monooxygenase; part of the gene cluster that mediates the biosynthesis of terrein, a fungal metabolite with ecological, antimicrobial, antiproliferative, and antioxidative activities. The first step in the pathway is performed by the polyketide synthase terA that produces 4-hydroxy-6-methylpyranon (4-HMP), orsellinic acid (OA), and 2,3-dehydro-6-hydroxymellein (2,3-dehydro-6-HM) by condensing acetyl-CoA with two, three, or four malonyl-CoA units, respectively. 4-HMP and OA are not pathway intermediates, but are rather shunt or side products. 2,3-dehydro-6-HM is further converted to 6-hydroxymellein (6-HM) by the 6-hydroxymellein synthase terB. The monooxygenases terC and terD, the multicopper oxidase terE and the Kelch-like protein terF are then involved in the transformation of 6-HM to terrein. Even if they are co-regulated with the other terrein cluster genes, terH and terI seem to be dispensable for terrein production; whereas one or both of the 2 transporters terG and terJ are probably required for efficient secretion of metabolites. This is FAD-dependent monooxygenase terD from Aspergillus terreus (strain NIH 2624 / FGSC A1156).